The sequence spans 156 residues: Small ribosomal subunit protein uS7 (156 aa).

Belongs to the universal ribosomal protein uS7 family. In terms of assembly, part of the 30S ribosomal subunit. Contacts proteins S9 and S11.

Functionally, one of the primary rRNA binding proteins, it binds directly to 16S rRNA where it nucleates assembly of the head domain of the 30S subunit. Is located at the subunit interface close to the decoding center, probably blocks exit of the E-site tRNA. The protein is Small ribosomal subunit protein uS7 of Leifsonia xyli subsp. xyli (strain CTCB07).